The chain runs to 232 residues: Orotidine 5'-phosphate decarboxylase (232 aa).

Substrate is bound by residues Asp-13, Lys-35, 62–71 (DLKFHDIPNT), Thr-122, Arg-182, Gln-191, Gly-211, and Arg-212. The Proton donor role is filled by Lys-64.

Belongs to the OMP decarboxylase family. Type 1 subfamily. In terms of assembly, homodimer.

The enzyme catalyses orotidine 5'-phosphate + H(+) = UMP + CO2. The protein operates within pyrimidine metabolism; UMP biosynthesis via de novo pathway; UMP from orotate: step 2/2. Its function is as follows. Catalyzes the decarboxylation of orotidine 5'-monophosphate (OMP) to uridine 5'-monophosphate (UMP). This Pseudomonas aeruginosa (strain LESB58) protein is Orotidine 5'-phosphate decarboxylase.